The following is a 796-amino-acid chain: Inactive dipeptidyl peptidase 10 (796 aa).

Residues 1–34 are Cytoplasmic-facing; the sequence is MNQTASVSHHIKCQPSKTIKELGSNSPPQRNWKG. The segment at 1-56 is mediates effects on KCND2; it reads MNQTASVSHHIKCQPSKTIKELGSNSPPQRNWKGIAIALLVILVVCSLITMSVILL. A helical; Signal-anchor for type II membrane protein membrane pass occupies residues 35 to 55; it reads IAIALLVILVVCSLITMSVIL. The Extracellular segment spans residues 56-796; it reads LTPDELTNSS…VLPQEPEEDE (741 aa). Residues N90, N111, and N119 are each glycosylated (N-linked (GlcNAc...) asparagine). Phosphotyrosine is present on residues Y138 and Y143. Residues N257, N342, and N748 are each glycosylated (N-linked (GlcNAc...) asparagine).

Belongs to the peptidase S9B family. DPPIV subfamily. In terms of assembly, may form oligomers. Interacts with KCND1. Interacts with KCND2. N-glycosylation is important for cell surface expression, specially at Asn-257, which is crucial. In terms of tissue distribution, found in serum, T-cells and brain (at protein level). Expressed in brain, pancreas, spinal cord and adrenal glands.

The protein localises to the cell membrane. Promotes cell surface expression of the potassium channel KCND2. Modulates the activity and gating characteristics of the potassium channel KCND2. Has no dipeptidyl aminopeptidase activity. This is Inactive dipeptidyl peptidase 10 (DPP10) from Homo sapiens (Human).